We begin with the raw amino-acid sequence, 75 residues long: Small integral membrane protein 7-A (75 aa).

An N-terminal signal peptide occupies residues 1–17 (MIGDLLLFGTLLVNAGA). The Extracellular portion of the chain corresponds to 18 to 53 (VLNFKLKKKESQGFGDDLTEATTGDNIREFLLSLRY). The chain crosses the membrane as a helical span at residues 54-74 (FRIFIALWNIFMMFCMIVLFG). Position 75 (Ser75) is a topological domain, cytoplasmic.

It belongs to the SMIM7 family.

The protein localises to the membrane. In Xenopus laevis (African clawed frog), this protein is Small integral membrane protein 7-A (smim7-a).